Here is a 390-residue protein sequence, read N- to C-terminus: tRNA(Met) cytidine acetate ligase (390 aa).

Residues 7–20 (VVEY…HKLH), glycine 101, asparagine 162, and arginine 187 contribute to the ATP site.

It belongs to the TmcAL family.

It is found in the cytoplasm. The catalysed reaction is cytidine(34) in elongator tRNA(Met) + acetate + ATP = N(4)-acetylcytidine(34) in elongator tRNA(Met) + AMP + diphosphate. Its function is as follows. Catalyzes the formation of N(4)-acetylcytidine (ac(4)C) at the wobble position of elongator tRNA(Met), using acetate and ATP as substrates. First activates an acetate ion to form acetyladenylate (Ac-AMP) and then transfers the acetyl group to tRNA to form ac(4)C34. The polypeptide is tRNA(Met) cytidine acetate ligase (Listeria monocytogenes serotype 4a (strain HCC23)).